A 217-amino-acid chain; its full sequence is Probable transaldolase (217 aa).

K83 serves as the catalytic Schiff-base intermediate with substrate.

It belongs to the transaldolase family. Type 3B subfamily.

It is found in the cytoplasm. It catalyses the reaction D-sedoheptulose 7-phosphate + D-glyceraldehyde 3-phosphate = D-erythrose 4-phosphate + beta-D-fructose 6-phosphate. The protein operates within carbohydrate degradation; pentose phosphate pathway; D-glyceraldehyde 3-phosphate and beta-D-fructose 6-phosphate from D-ribose 5-phosphate and D-xylulose 5-phosphate (non-oxidative stage): step 2/3. Its function is as follows. Transaldolase is important for the balance of metabolites in the pentose-phosphate pathway. This is Probable transaldolase from Caulobacter sp. (strain K31).